The primary structure comprises 1774 residues: Kinesin-like protein KIF20B (1774 aa).

One can recognise a Kinesin motor domain in the interval 58 to 477 (YLQVCLRIRP…LKFSTTAQRV (420 aa)). Residue 152–159 (GLTNSGKT) coordinates ATP. At serine 486 the chain carries Phosphoserine. Coiled-coil stretches lie at residues 525-601 (EDVL…KIRE) and 705-747 (QEAI…LVQA). Residues 538–555 (EENEETQNMETELTDEDS) show a composition bias toward acidic residues. 2 disordered regions span residues 538–557 (EENE…DSDK) and 740–799 (ESNS…PPAK). Positions 741–778 (SNSLVQALKTSSKVDTSLTSNKSTCNETSEMPKNSRAQ) are enriched in polar residues. The span at 779-788 (THSERKRLNE) shows a compositional bias: basic and acidic residues. Residues 824–946 (SEVVEGNRVL…QMQTKIDELR (123 aa)) adopt a coiled-coil conformation. Serine 950 bears the Phosphoserine mark. The interval 1002–1059 (ENSFHASIEAIWEECKEIVKASSKKSHQIQGLEEQIEKLQVEVKGYREENSDLRAQES) is necessary and sufficient for interaction with SHTN1. Residues 1021–1507 (KASSKKSHQI…DEEIQELRKA (487 aa)) are a coiled coil. Phosphoserine is present on residues serine 1107 and serine 1542. The interaction with PIN1 stretch occupies residues 1514 to 1774 (TENQTMNPKP…KRRLRTRTAK (261 aa)). Threonine 1598 carries the post-translational modification Phosphothreonine; by CDK1. At serine 1612 the chain carries Phosphoserine. The interval 1625 to 1663 (KKNSTPRSNVKFPVSEHRNSPVKKEQKVSVGPSSKKTYS) is disordered. Residues 1638–1651 (VSEHRNSPVKKEQK) show a composition bias toward basic and acidic residues. Phosphoserine is present on residues serine 1669 and serine 1694.

The protein belongs to the TRAFAC class myosin-kinesin ATPase superfamily. Kinesin family. In terms of assembly, oligomerizes (via kinesin motor domain). Associates with microtubules. Interacts (via C-terminal globular tail region) with PIN1 (via WW domain). Interacts with PRC1. Interacts with SHTN1 (via N-terminus); the interaction is direct and promotes the association of SHTN1 to microtubules in primary neurons. Associates with microtubules. In terms of processing, phosphorylated during mitosis by CDK1. As to expression, expressed in the brain (at protein level).

The protein localises to the nucleus. It localises to the cytoplasm. The protein resides in the cytoskeleton. Its subcellular location is the microtubule organizing center. It is found in the centrosome. The protein localises to the nucleolus. It localises to the nucleoplasm. The protein resides in the spindle. Its subcellular location is the spindle pole. It is found in the midbody. The protein localises to the cell projection. It localises to the axon. The protein resides in the growth cone. Plus-end-directed motor enzyme that is required for completion of cytokinesis. Required for proper midbody organization and abscission in polarized cortical stem cells. Plays a role in the regulation of neuronal polarization by mediating the transport of specific cargos. Participates in the mobilization of SHTN1 and in the accumulation of PIP3 in the growth cone of primary hippocampal neurons in a tubulin and actin-dependent manner. In the developing telencephalon, cooperates with SHTN1 to promote both the transition from the multipolar to the bipolar stage and the radial migration of cortical neurons from the ventricular zone toward the superficial layer of the neocortex. Involved in cerebral cortex growth. Acts as an oncogene for promoting bladder cancer cells proliferation, apoptosis inhibition and carcinogenic progression. This is Kinesin-like protein KIF20B from Mus musculus (Mouse).